Here is a 442-residue protein sequence, read N- to C-terminus: tRNA modification GTPase MnmE (442 aa).

R24, E82, and K120 together coordinate (6S)-5-formyl-5,6,7,8-tetrahydrofolate. Residues 217–367 (GLHIVITGEP…LVSVIKEKVE (151 aa)) enclose the TrmE-type G domain. GTP contacts are provided by residues 227–232 (NVGKST), 246–252 (SEYVGTT), and 271–274 (DTAG). Mg(2+)-binding residues include S231 and T252. K442 contributes to the (6S)-5-formyl-5,6,7,8-tetrahydrofolate binding site.

It belongs to the TRAFAC class TrmE-Era-EngA-EngB-Septin-like GTPase superfamily. TrmE GTPase family. As to quaternary structure, homodimer. Heterotetramer of two MnmE and two MnmG subunits. It depends on K(+) as a cofactor.

The protein resides in the cytoplasm. Functionally, exhibits a very high intrinsic GTPase hydrolysis rate. Involved in the addition of a carboxymethylaminomethyl (cmnm) group at the wobble position (U34) of certain tRNAs, forming tRNA-cmnm(5)s(2)U34. The polypeptide is tRNA modification GTPase MnmE (Wolbachia sp. subsp. Brugia malayi (strain TRS)).